The sequence spans 262 residues: CD99 antigen-like protein 2 (262 aa).

Residues Met1–Gly25 form the signal peptide. The Extracellular portion of the chain corresponds to Asp26–Gly185. The disordered stretch occupies residues Glu38 to Val181. Low complexity-rich tracts occupy residues Thr49 to Thr60 and Val98 to Phe119. Basic and acidic residues-rich tracts occupy residues Leu125 to Arg136 and Tyr159 to Gly168. Ser178 is a glycosylation site (O-linked (Xyl...) (chondroitin sulfate) serine). A helical transmembrane segment spans residues Thr186–Ile206. The Cytoplasmic portion of the chain corresponds to Ser207–Ile262.

It belongs to the CD99 family. Post-translationally, O-glycosylated. Detected in cerebrospinal fluid (at protein level). Expressed in many tissues, with low expression in thymus.

The protein localises to the cell membrane. It is found in the cell junction. The protein resides in the secreted. In terms of biological role, plays a role in a late step of leukocyte extravasation helping cells to overcome the endothelial basement membrane. Acts at the same site as, but independently of, PECAM1. Homophilic adhesion molecule, but these interactions may not be required for cell aggregation. This Homo sapiens (Human) protein is CD99 antigen-like protein 2 (CD99L2).